The following is a 451-amino-acid chain: Probable NADH dehydrogenase (451 aa).

Position 41–71 (41–71) interacts with FAD; that stretch reads KLIILGCGWGSYSFLKNLNSIKYDITVISPR. 199 to 236 provides a ligand contact to NAD(+); sequence LSFVIVGGGATGIEFTSELNDFFSEDLSRLFPFVPVNE.

Belongs to the NADH dehydrogenase family. The cofactor is FAD.

The enzyme catalyses a ubiquinone + NADH + 5 H(+)(in) = a ubiquinol + NAD(+) + 4 H(+)(out). The sequence is that of Probable NADH dehydrogenase from Dictyostelium discoideum (Social amoeba).